We begin with the raw amino-acid sequence, 242 residues long: DNA repair protein RecO (242 aa).

It belongs to the RecO family.

In terms of biological role, involved in DNA repair and RecF pathway recombination. The sequence is that of DNA repair protein RecO from Laribacter hongkongensis (strain HLHK9).